A 396-amino-acid polypeptide reads, in one-letter code: Phosphoglycerate kinase (396 aa).

Substrate contacts are provided by residues 21–23 (DFN), Arg-36, 59–62 (HLGK), Arg-119, and Arg-156. ATP contacts are provided by residues Lys-206, Glu-325, and 352 to 355 (GGDS).

It belongs to the phosphoglycerate kinase family. As to quaternary structure, monomer.

Its subcellular location is the cytoplasm. It carries out the reaction (2R)-3-phosphoglycerate + ATP = (2R)-3-phospho-glyceroyl phosphate + ADP. The protein operates within carbohydrate degradation; glycolysis; pyruvate from D-glyceraldehyde 3-phosphate: step 2/5. The protein is Phosphoglycerate kinase of Staphylococcus saprophyticus subsp. saprophyticus (strain ATCC 15305 / DSM 20229 / NCIMB 8711 / NCTC 7292 / S-41).